A 524-amino-acid polypeptide reads, in one-letter code: Keratin, type II cytoskeletal 71 (524 aa).

The tract at residues 1 to 130 (MSRQFTCKSG…DPEIQKVRAQ (130 aa)) is head. The tract at residues 131–166 (EREQIKALNNKFASFIDKVRFLEQQNQVLQTKWELL) is coil 1A. In terms of domain architecture, IF rod spans 131-444 (EREQIKALNN…KLLESEECRM (314 aa)). The tract at residues 167-185 (QQLDLNNCKNNLEPILEGH) is linker 1. The segment at 186 to 277 (ISNMRKQLET…CLFEAEMAQI (92 aa)) is coil 1B. The tract at residues 278-301 (QSHISDMSVILSMDNNRNLDLDSI) is linker 12. A coil 2 region spans residues 302-440 (IDEVRAQYEE…ATYRKLLESE (139 aa)). The tail stretch occupies residues 441–524 (ECRMSGEYSS…LSTPSKKGGR (84 aa)). Positions 493–524 (GGENRSRGSASDYKDTLTKGSSLSTPSKKGGR) are disordered. Positions 494-509 (GENRSRGSASDYKDTL) are enriched in basic and acidic residues. The span at 510-524 (TKGSSLSTPSKKGGR) shows a compositional bias: polar residues.

The protein belongs to the intermediate filament family. Heterodimer of a type I and a type II keratin. Associates with KRT16 and/or KRT17. In terms of tissue distribution, specifically expressed in the inner root sheath (IRS) of the hair follicle. Present in Henle and the Huxley layers of the IRS, while expression in the cuticle is unsure (at protein level).

The protein localises to the cytoplasm. Its subcellular location is the cytoskeleton. Functionally, plays a central role in hair formation. Essential component of keratin intermediate filaments in the inner root sheath (IRS) of the hair follicle. The chain is Keratin, type II cytoskeletal 71 (Krt71) from Mus musculus (Mouse).